The chain runs to 250 residues: Aminoglycoside 3'-phosphotransferase (250 aa).

Asp178 serves as the catalytic Proton acceptor.

This sequence belongs to the aminoglycoside phosphotransferase family.

The catalysed reaction is kanamycin A + ATP = kanamycin 3'-phosphate + ADP + H(+). In terms of biological role, resistance to kanamycin and structurally-related aminoglycosides, including amikacin. The protein is Aminoglycoside 3'-phosphotransferase (aphA-7) of Campylobacter jejuni.